The primary structure comprises 367 residues: Probable butyrate kinase (367 aa).

This sequence belongs to the acetokinase family.

Its subcellular location is the cytoplasm. The catalysed reaction is butanoate + ATP = butanoyl phosphate + ADP. This is Probable butyrate kinase from Bacillus anthracis (strain A0248).